We begin with the raw amino-acid sequence, 310 residues long: Protein A56 (310 aa).

The N-terminal stretch at 1 to 16 (MKQLSIVILLLSIVYT) is a signal peptide. Residues 17–275 (TKPHPTQISK…TKYTTSDFIE (259 aa)) are Virion surface-facing. Positions 19–121 (PHPTQISKKL…TNDTDKIDYE (103 aa)) constitute an Ig-like V-type domain. Cysteines 36 and 105 form a disulfide. N-linked (GlcNAc...) asparagine; by host glycosylation is found at Asn39, Asn113, and Asn133. The interval 153–195 (HTEEQHDSDTTICTSESTTQISETSESTTSSQISETSESTSYG) is disordered. Over residues 162-193 (TTICTSESTTQISETSESTTSSQISETSESTS) the composition is skewed to low complexity. A glycan (N-linked (GlcNAc...) asparagine; by host) is linked at Asn203. The helical transmembrane segment at 276 to 300 (IFGIVSLILLLAVAIFCIIYYFCSG) threads the bilayer. At 301 to 310 (RSRKQETNIL) the chain is on the intravirion side.

As to quaternary structure, heterodimerizes with K2. The heterodimer A56/K2 interacts with components of the entry fusion complex A16 and G9. Interacts with K2 protein. Heterodimer with C3/VPC protein; disulfide-linked. Post-translationally, glycosylated; contains phosphate and sulfate-substituted glycans. O-glycosylation is required for hemagglutination and hemadsorption activities of infected cell membranes.

The protein localises to the virion membrane. Its subcellular location is the host membrane. In terms of biological role, prevents cell to cell fusion by interacting with and directing the viral K2 protein on the host plasma membrane. The A56-K2 complex associates with components of the entry fusion complex (EFC) presumably to avoid superinfection and syncytium formation. Via its interaction with C3/VCP protein, protects the infected cell and probably also the extracellular enveloped virus from complement attack. This chain is Protein A56 (HA), found in Raccoon poxvirus (RCN).